Reading from the N-terminus, the 1937-residue chain is Collagen-like protein 7 (1937 aa).

N6 and N21 each carry an N-linked (GlcNAc...) asparagine; by host glycan. 4 disordered regions span residues 88-248, 294-531, 583-643, and 670-1144; these read CKGN…KGDK, NLKG…PDLG, LKGD…NQGV, and IKGD…DTAT. 5 consecutive Collagen-like domains span residues 102 to 161, 168 to 227, 297 to 356, 363 to 422, and 453 to 512; these read GPKG…KGEK, GEKG…KGDI, GEKG…KGEK, GDKG…IGEK, and GDKG…KGDK. Residues 296-514 show a composition bias toward basic and acidic residues; that stretch reads KGEKGDKGNK…DKGDKGDKGD (219 aa). A glycan (N-linked (GlcNAc...) asparagine; by host) is linked at N515. Basic and acidic residues-rich tracts occupy residues 584–605, 614–625, and 670–899; these read KGDK…KGDK, KGEKGDKGDKGD, and IKGD…KGDK. Collagen-like domains are found at residues 672–731, 735–854, 867–926, 936–995, and 1023–1142; these read GDKG…KGDK, GNKG…KGNI, GLKG…KGDK, GIKG…KGDK, and GSKG…KGDT. A glycan (N-linked (GlcNAc...) asparagine; by host) is linked at N902. A compositionally biased stretch (basic and acidic residues) spans 907 to 1141; sequence YKGDKGDKGS…DKGDKGDKGD (235 aa). N-linked (GlcNAc...) asparagine; by host glycans are attached at residues N1178, N1192, N1212, N1217, N1245, N1246, N1255, N1317, N1422, N1427, N1432, N1443, N1452, N1477, N1494, N1506, N1513, N1533, N1598, N1619, N1620, N1632, N1641, N1663, N1664, N1672, N1682, N1683, N1732, N1735, N1746, N1756, N1784, N1842, and N1934.

In terms of processing, may be hydroxylated on lysine by the viral-encoded procollagen-lysine,2-oxoglutarate 5-dioxygenase.

It localises to the virion. Its function is as follows. May participate in the formation of a layer of cross-linked glycosylated fibrils at the viral surface thus giving it a hairy-like appearance. This Acanthamoeba polyphaga mimivirus (APMV) protein is Collagen-like protein 7.